The primary structure comprises 310 residues: tRNA dimethylallyltransferase (310 aa).

10–17 (GPTAVGKS) contributes to the ATP binding site. Residue 12 to 17 (TAVGKS) coordinates substrate. 3 interaction with substrate tRNA regions span residues 35 to 38 (DSAQ), 159 to 163 (QRIQR), and 274 to 281 (KRQITWLR).

The protein belongs to the IPP transferase family. Monomer. The cofactor is Mg(2+).

It carries out the reaction adenosine(37) in tRNA + dimethylallyl diphosphate = N(6)-dimethylallyladenosine(37) in tRNA + diphosphate. Catalyzes the transfer of a dimethylallyl group onto the adenine at position 37 in tRNAs that read codons beginning with uridine, leading to the formation of N6-(dimethylallyl)adenosine (i(6)A). The protein is tRNA dimethylallyltransferase of Halorhodospira halophila (strain DSM 244 / SL1) (Ectothiorhodospira halophila (strain DSM 244 / SL1)).